The following is a 453-amino-acid chain: Formimidoylglutamate deiminase (453 aa).

Zn(2+)-binding residues include His56 and His58. N-formimidoyl-L-glutamate contacts are provided by Gln61, Arg82, Tyr121, His206, and Arg209. Position 232 (His232) interacts with Zn(2+). Glu235 provides a ligand contact to N-formimidoyl-L-glutamate. Active-site proton acceptor residues include His269 and Asp320. Asp320 is a binding site for Zn(2+).

The protein belongs to the metallo-dependent hydrolases superfamily. Homodimer. Zn(2+) serves as cofactor.

The catalysed reaction is N-formimidoyl-L-glutamate + H2O = N-formyl-L-glutamate + NH4(+). It functions in the pathway amino-acid degradation; L-histidine degradation into L-glutamate; L-glutamate from N-formimidoyl-L-glutamate (deiminase route): step 1/2. Its activity is regulated as follows. Inhibited by the metal chelator dipicolinate. Inhibited by N-formimino-L-aspartate and N-guanidino-L-glutaric acid. In terms of biological role, catalyzes the hydrolysis of N-formimino-L-glutamate to N-formyl-L-glutamate and ammonia. The chain is Formimidoylglutamate deiminase from Pseudomonas aeruginosa (strain ATCC 15692 / DSM 22644 / CIP 104116 / JCM 14847 / LMG 12228 / 1C / PRS 101 / PAO1).